Reading from the N-terminus, the 156-residue chain is MYYAIFESPIGPILLAGDEEGLKYVNFMKGKKKIEVPDSWVENEEFFREASRQLEAYFAGELKSFDVKLAPEGTEFQKSVWNALKEIPYGETRTYGEIAKNIGNPKASRAVGLANNRNPIAIIVPCHRVIGANGKLTGYASGLDIKEFLLKLEGSC.

The Nucleophile; methyl group acceptor role is filled by cysteine 126.

This sequence belongs to the MGMT family.

It is found in the cytoplasm. It carries out the reaction a 6-O-methyl-2'-deoxyguanosine in DNA + L-cysteinyl-[protein] = S-methyl-L-cysteinyl-[protein] + a 2'-deoxyguanosine in DNA. The catalysed reaction is a 4-O-methyl-thymidine in DNA + L-cysteinyl-[protein] = a thymidine in DNA + S-methyl-L-cysteinyl-[protein]. In terms of biological role, involved in the cellular defense against the biological effects of O6-methylguanine (O6-MeG) and O4-methylthymine (O4-MeT) in DNA. Repairs the methylated nucleobase in DNA by stoichiometrically transferring the methyl group to a cysteine residue in the enzyme. This is a suicide reaction: the enzyme is irreversibly inactivated. The chain is Methylated-DNA--protein-cysteine methyltransferase from Methanosarcina acetivorans (strain ATCC 35395 / DSM 2834 / JCM 12185 / C2A).